The sequence spans 514 residues: Histidine ammonia-lyase (514 aa).

Positions 147–149 (ASG) form a cross-link, 5-imidazolinone (Ala-Gly). Ser-148 is subject to 2,3-didehydroalanine (Ser).

It belongs to the PAL/histidase family. In terms of processing, contains an active site 4-methylidene-imidazol-5-one (MIO), which is formed autocatalytically by cyclization and dehydration of residues Ala-Ser-Gly.

It localises to the cytoplasm. It catalyses the reaction L-histidine = trans-urocanate + NH4(+). It participates in amino-acid degradation; L-histidine degradation into L-glutamate; N-formimidoyl-L-glutamate from L-histidine: step 1/3. The polypeptide is Histidine ammonia-lyase (Gloeobacter violaceus (strain ATCC 29082 / PCC 7421)).